Consider the following 207-residue polypeptide: Glycerol-3-phosphate acyltransferase (207 aa).

The next 6 membrane-spanning stretches (helical) occupy residues 1-21 (MIII…GKYF), 42-62 (ILGV…GTLA), 65-85 (IPII…FAII), 105-125 (AGVL…IFLL), 138-158 (ITVA…GFIL), and 159-179 (TDYD…IIIR).

This sequence belongs to the PlsY family. As to quaternary structure, probably interacts with PlsX.

The protein localises to the cell membrane. The catalysed reaction is an acyl phosphate + sn-glycerol 3-phosphate = a 1-acyl-sn-glycero-3-phosphate + phosphate. Its pathway is lipid metabolism; phospholipid metabolism. Its function is as follows. Catalyzes the transfer of an acyl group from acyl-phosphate (acyl-PO(4)) to glycerol-3-phosphate (G3P) to form lysophosphatidic acid (LPA). This enzyme utilizes acyl-phosphate as fatty acyl donor, but not acyl-CoA or acyl-ACP. The protein is Glycerol-3-phosphate acyltransferase of Streptococcus agalactiae serotype Ia (strain ATCC 27591 / A909 / CDC SS700).